The chain runs to 97 residues: MSTTAELAELHDLVGGLRRCVTALKARFGDNPATRRIVIDADRILTDIELLDTDVSELDLERAAVPQPSEKIAIPDTEYDREFWRDVDDEGVGGHRY.

Ser-2 bears the N-acetylserine mark.

This is an uncharacterized protein from Mycobacterium tuberculosis (strain ATCC 25618 / H37Rv).